Consider the following 327-residue polypeptide: Glycerol-3-phosphate dehydrogenase [NAD(P)+] (327 aa).

The NADPH site is built by Phe13, Arg34, and Lys107. Residues Lys107 and Gly135 each contribute to the sn-glycerol 3-phosphate site. Ala139 is a binding site for NADPH. Lys190, Asp243, Ser253, Arg254, and Asn255 together coordinate sn-glycerol 3-phosphate. Lys190 functions as the Proton acceptor in the catalytic mechanism. Arg254 serves as a coordination point for NADPH. Positions 276 and 277 each coordinate NADPH.

This sequence belongs to the NAD-dependent glycerol-3-phosphate dehydrogenase family.

The protein localises to the cytoplasm. The enzyme catalyses sn-glycerol 3-phosphate + NAD(+) = dihydroxyacetone phosphate + NADH + H(+). The catalysed reaction is sn-glycerol 3-phosphate + NADP(+) = dihydroxyacetone phosphate + NADPH + H(+). It participates in membrane lipid metabolism; glycerophospholipid metabolism. Its function is as follows. Catalyzes the reduction of the glycolytic intermediate dihydroxyacetone phosphate (DHAP) to sn-glycerol 3-phosphate (G3P), the key precursor for phospholipid synthesis. The polypeptide is Glycerol-3-phosphate dehydrogenase [NAD(P)+] (Rhizobium etli (strain CIAT 652)).